We begin with the raw amino-acid sequence, 611 residues long: MSIHIVALGNEGDTFHQDNRPSGLIRTYLGRSPLVSGDESSLLLNAASTVARPVFTEYQASAFGNVKLVVHDCPVWDIFDSDWYTSRNLIGGADIIVIKYNVNDKFSFHEVKDNYIPVIKRALNSVPVIIAAVGTRQNEELPCTCPLCTSDRGSCVSTTEGIQLAKELGATYLELHSLDDFYIGKYFGGVLEYFMIQALNQKTSEKMKKRKMSNSFHGIRPPQLEQPEKMPVLKAEASHYNSDLNNLLFCCQCVDVVFYNPNLKKVVEAHKIVLCAVSHVFMLLFNVKSPTDIQDSSIIRTTQDLFAINRDTAFPGASHESSGNPPLRVIVKDALFCSCLSDILRFIYSGAFQWEELEEDIRKKLKDSGDVSNVIEKVKCILKTPGKINCLRNCKTYQARKPLWFYNTSLKFFLNKPMLADVVFEIQGTTVPAHRAILVARCEVMAAMFNGNYMEAKSVLIPVYGVSKETFLSFLEYLYTDSCCPAGIFQAMCLLICAEMYQVSRLQHICELFIITQLQSMPSRELASMNLDIVDLLKKAKFHHSDCLSTWLLHFIATNYLIFSQKPEFQDLSVEERSFVEKHRWPSNMYLKQLAEYRKYIHSRKCRCLVM.

The rho-like stretch occupies residues 1–175; that stretch reads MSIHIVALGN…KELGATYLEL (175 aa). 2 consecutive BTB domains span residues 254–356 and 420–487; these read VDVV…QWEE and ADVV…CPAG. The interaction with Rab9 stretch occupies residues 420 to 611; that stretch reads ADVVFEIQGT…HSRKCRCLVM (192 aa).

As to quaternary structure, interacts with RAB9A and RAB9B (at lower level compared to RAB9A-binding). Interacts with M6PRBP1/TIP47. Ubiquitous. Highly expressed in neural and cardiac tissues, pancreas, placenta and testis.

It is found in the golgi apparatus. Functionally, rab9-regulated ATPase required for endosome to Golgi transport. Involved in transport vesicle docking at the Golgi complex, possibly by participating in release M6PRBP1/TIP47 from vesicles to permit their efficient docking and fusion at the Golgi. Specifically binds Rab9, but not other Rab proteins. Has low intrinsic ATPase activity due to autoinhibition, which is relieved by Rab9. This chain is Rho-related BTB domain-containing protein 3 (RHOBTB3), found in Homo sapiens (Human).